The primary structure comprises 436 residues: Glutamyl-tRNA reductase (436 aa).

Substrate-binding positions include 49 to 52, Ser-109, 114 to 116, and Gln-120; these read TCNR and EGQ. The Nucleophile role is filled by Cys-50. 198–203 serves as a coordination point for NADP(+); it reads GAGRMS.

Belongs to the glutamyl-tRNA reductase family. Homodimer.

It catalyses the reaction (S)-4-amino-5-oxopentanoate + tRNA(Glu) + NADP(+) = L-glutamyl-tRNA(Glu) + NADPH + H(+). It participates in porphyrin-containing compound metabolism; protoporphyrin-IX biosynthesis; 5-aminolevulinate from L-glutamyl-tRNA(Glu): step 1/2. Its pathway is porphyrin-containing compound metabolism; chlorophyll biosynthesis. In terms of biological role, catalyzes the NADPH-dependent reduction of glutamyl-tRNA(Glu) to glutamate 1-semialdehyde (GSA). The polypeptide is Glutamyl-tRNA reductase (Prochlorococcus marinus (strain MIT 9215)).